We begin with the raw amino-acid sequence, 398 residues long: L-methionine gamma-lyase (398 aa).

Pyridoxal 5'-phosphate contacts are provided by residues 59–61 and 89–90; these read YSR and GM. Y114 lines the substrate pocket. 208-210 lines the pyridoxal 5'-phosphate pocket; it reads SAT. Position 211 is an N6-(pyridoxal phosphate)lysine (K211). Residue R375 participates in substrate binding.

Belongs to the trans-sulfuration enzymes family. L-methionine gamma-lyase subfamily. In terms of assembly, homotetramer; dimer of active dimers. It depends on pyridoxal 5'-phosphate as a cofactor.

It carries out the reaction L-methionine + H2O = methanethiol + 2-oxobutanoate + NH4(+). The enzyme catalyses L-homocysteine + H2O = 2-oxobutanoate + hydrogen sulfide + NH4(+) + H(+). Irreversibly inactivated by DL-propargylglycine. Its function is as follows. Catalyzes the alpha,gamma-elimination of L-methionine to produce methanethiol, 2-oxobutanoate and ammonia. Is involved in L-methionine catabolism. In fact, shows a multicatalytic function since it also catalyzes gamma-replacement of L-methionine with thiol compounds, alpha,gamma-elimination and gamma-replacement reactions of L-homocysteine and its S-substituted derivatives, O-substituted-L-homoserines and DL-selenomethionine, and, to a lesser extent, alpha,beta-elimination and beta-replacement reactions of L-cysteine, S-methyl-L-cysteine, and O-acetyl-L-serine. Also catalyzes deamination and gamma-addition reactions of L-vinylglycine. Thus, the enzyme is able to cleave C-S, C-Se, and C-O bonds of sulfur, selenium, and oxygen amino acids, respectively. The polypeptide is L-methionine gamma-lyase (Pseudomonas putida (Arthrobacter siderocapsulatus)).